The sequence spans 1302 residues: Regulator of telomere elongation helicase 1 (1302 aa).

Residues 7 to 297 (NGVTVDFPFQ…TKTAQQGEPH (291 aa)) form the Helicase ATP-binding domain. 42–49 (SHTGTGKT) is an ATP binding site. The [4Fe-4S] cluster site is built by C146, C164, C173, and C208. The Nuclear localization signal motif lies at 152-168 (KKQESNHIQIHLCRKKV). Residues 251 to 254 (DEAH) carry the DEAH box motif. A compositionally biased stretch (low complexity) spans 758–767 (PAPAPRATAP). Residues 758-819 (PAPAPRATAP…AAGDPESSLC (62 aa)) are disordered. Residues 770 to 780 (REGEDAVREVK) show a composition bias toward basic and acidic residues. The Nuclear localization signal signature appears at 873 to 879 (PRGGRKK). Disordered stretches follow at residues 981-1006 (RPEH…APDP), 1019-1058 (DPRE…GKQG), 1134-1153 (CTDL…PQEE), and 1160-1234 (VLTH…QAAG). Over residues 1178 to 1187 (KTQSKISSLL) the composition is skewed to polar residues. Positions 1180–1187 (QSKISSLL) match the PIP-box motif.

Belongs to the helicase family. RAD3/XPD subfamily. As to quaternary structure, interacts with TERF1. Interacts (via PIP-box) with PCNA; the interaction is direct and essential for suppressing telomere fragility. Interacts with MMS19; the interaction mediates the association of RTEL1 with the cytosolic iron-sulfur protein assembly (CIA) complex.

It localises to the nucleus. The enzyme catalyses ATP + H2O = ADP + phosphate + H(+). Its function is as follows. A probable ATP-dependent DNA helicase implicated in telomere-length regulation, DNA repair and the maintenance of genomic stability. Acts as an anti-recombinase to counteract toxic recombination and limit crossover during meiosis. Regulates meiotic recombination and crossover homeostasis by physically dissociating strand invasion events and thereby promotes noncrossover repair by meiotic synthesis dependent strand annealing (SDSA) as well as disassembly of D loop recombination intermediates. Also disassembles T loops and prevents telomere fragility by counteracting telomeric G4-DNA structures, which together ensure the dynamics and stability of the telomere. The chain is Regulator of telomere elongation helicase 1 from Pongo abelii (Sumatran orangutan).